The chain runs to 429 residues: Histidine--tRNA ligase (429 aa).

The protein belongs to the class-II aminoacyl-tRNA synthetase family. In terms of assembly, homodimer.

Its subcellular location is the cytoplasm. It catalyses the reaction tRNA(His) + L-histidine + ATP = L-histidyl-tRNA(His) + AMP + diphosphate + H(+). This Streptococcus pneumoniae (strain JJA) protein is Histidine--tRNA ligase.